A 396-amino-acid chain; its full sequence is MAKAKFERNKPHCNIGTIGHVDHGKTSLTAAITKVLAETGGATFTAYDQIDKAPEEKARGITISTAHVEYETANRHYAHVDCPGHADYVKNMITGAAQMDGGILVVSAADGPMPQTREHILLARQVGVPALVVFLNKCDMVDDPELLELVEMEVRELLSKYDFPGDDIPIIKGSALAALENKDPKLGHDAILELMKAVDSYIPQPERPIDQPFLMPVEDVFSISGRGTVVTGRVERGIIKVGEEIEIVGLRDTVKTTCTGVEMFRKLLDQGQAGDNIGALLRGTKREEVERGQVLCKPGSVKPHTKFKAEAYILTKEEGGRHTPFFTNYRPQFYFRTTDVTGVVHLPEGTEMVMPGDNIAMEVHLIVPIAMEEKLRFAIREGGRTVGAGVVASIIE.

A tr-type G domain is found at 10-206 (KPHCNIGTIG…AVDSYIPQPE (197 aa)). Residues 19–26 (GHVDHGKT) form a G1 region. Position 19-26 (19-26 (GHVDHGKT)) interacts with GTP. A Mg(2+)-binding site is contributed by Thr-26. The G2 stretch occupies residues 60–64 (GITIS). The segment at 81–84 (DCPG) is G3. Residues 81 to 85 (DCPGH) and 136 to 139 (NKCD) contribute to the GTP site. The G4 stretch occupies residues 136 to 139 (NKCD). Residues 174-176 (SAL) form a G5 region.

Belongs to the TRAFAC class translation factor GTPase superfamily. Classic translation factor GTPase family. EF-Tu/EF-1A subfamily. As to quaternary structure, monomer.

Its subcellular location is the cytoplasm. The enzyme catalyses GTP + H2O = GDP + phosphate + H(+). Functionally, GTP hydrolase that promotes the GTP-dependent binding of aminoacyl-tRNA to the A-site of ribosomes during protein biosynthesis. The polypeptide is Elongation factor Tu (Rhodopseudomonas palustris (strain BisA53)).